The chain runs to 198 residues: Glycerol-3-phosphate acyltransferase (198 aa).

The next 5 membrane-spanning stretches (helical) occupy residues 2-22, 55-75, 88-108, 118-138, and 162-182; these read IIVI…TGYL, MITQ…CMLI, YLSI…FLGF, VGAF…VYFV, and IALR…GLLI.

This sequence belongs to the PlsY family. Probably interacts with PlsX.

The protein resides in the cell membrane. The catalysed reaction is an acyl phosphate + sn-glycerol 3-phosphate = a 1-acyl-sn-glycero-3-phosphate + phosphate. It functions in the pathway lipid metabolism; phospholipid metabolism. Functionally, catalyzes the transfer of an acyl group from acyl-phosphate (acyl-PO(4)) to glycerol-3-phosphate (G3P) to form lysophosphatidic acid (LPA). This enzyme utilizes acyl-phosphate as fatty acyl donor, but not acyl-CoA or acyl-ACP. This chain is Glycerol-3-phosphate acyltransferase, found in Clostridium acetobutylicum (strain ATCC 824 / DSM 792 / JCM 1419 / IAM 19013 / LMG 5710 / NBRC 13948 / NRRL B-527 / VKM B-1787 / 2291 / W).